A 423-amino-acid polypeptide reads, in one-letter code: Imidazolonepropionase (423 aa).

Fe(3+) is bound by residues His-78 and His-80. His-78 and His-80 together coordinate Zn(2+). The 4-imidazolone-5-propanoate site is built by Arg-87, Tyr-150, and His-183. An N-formimidoyl-L-glutamate-binding site is contributed by Tyr-150. Position 247 (His-247) interacts with Fe(3+). Zn(2+) is bound at residue His-247. Residue Glu-250 coordinates 4-imidazolone-5-propanoate. Position 322 (Asp-322) interacts with Fe(3+). A Zn(2+)-binding site is contributed by Asp-322. Residues Asn-324 and Gly-326 each coordinate N-formimidoyl-L-glutamate. Ser-327 serves as a coordination point for 4-imidazolone-5-propanoate.

Belongs to the metallo-dependent hydrolases superfamily. HutI family. It depends on Zn(2+) as a cofactor. Requires Fe(3+) as cofactor.

Its subcellular location is the cytoplasm. The catalysed reaction is 4-imidazolone-5-propanoate + H2O = N-formimidoyl-L-glutamate. Its pathway is amino-acid degradation; L-histidine degradation into L-glutamate; N-formimidoyl-L-glutamate from L-histidine: step 3/3. Its function is as follows. Catalyzes the hydrolytic cleavage of the carbon-nitrogen bond in imidazolone-5-propanoate to yield N-formimidoyl-L-glutamate. It is the third step in the universal histidine degradation pathway. The polypeptide is Imidazolonepropionase (Bacillus thuringiensis (strain Al Hakam)).